We begin with the raw amino-acid sequence, 311 residues long: Malate dehydrogenase (311 aa).

NAD(+) is bound by residues 7–13 (GAAGGIG) and aspartate 34. Substrate-binding residues include arginine 81 and arginine 87. Residues asparagine 94 and 117–119 (ITN) contribute to the NAD(+) site. Substrate-binding residues include asparagine 119 and arginine 153. The active-site Proton acceptor is histidine 177. Methionine 227 serves as a coordination point for NAD(+).

This sequence belongs to the LDH/MDH superfamily. MDH type 1 family. Homodimer.

It carries out the reaction (S)-malate + NAD(+) = oxaloacetate + NADH + H(+). In terms of biological role, catalyzes the reversible oxidation of malate to oxaloacetate. The polypeptide is Malate dehydrogenase (Shewanella baltica (strain OS223)).